The primary structure comprises 736 residues: Catalase-peroxidase (736 aa).

Residues 1–30 (MGGNVMTDDKMNSVTSGANKQETGRDMSNR) are disordered. Polar residues predominate over residues 12 to 21 (NSVTSGANKQ). Positions 101-224 (WHSAGTYRAG…LAAVQMGLIY (124 aa)) form a cross-link, tryptophyl-tyrosyl-methioninium (Trp-Tyr) (with M-250). Catalysis depends on histidine 102, which acts as the Proton acceptor. The tryptophyl-tyrosyl-methioninium (Tyr-Met) (with W-101) cross-link spans 224–250 (YVNPEGPNGNPDPIAAAKDIREVFARM). A heme b-binding site is contributed by histidine 265. The tract at residues 351-373 (KGGAGAGTIPDAHDPSKRHAPSM) is disordered.

The protein belongs to the peroxidase family. Peroxidase/catalase subfamily. Homodimer or homotetramer. It depends on heme b as a cofactor. Formation of the three residue Trp-Tyr-Met cross-link is important for the catalase, but not the peroxidase activity of the enzyme.

The catalysed reaction is H2O2 + AH2 = A + 2 H2O. The enzyme catalyses 2 H2O2 = O2 + 2 H2O. Functionally, bifunctional enzyme with both catalase and broad-spectrum peroxidase activity. The chain is Catalase-peroxidase from Methanosarcina acetivorans (strain ATCC 35395 / DSM 2834 / JCM 12185 / C2A).